The chain runs to 83 residues: ATP synthase subunit c 2 (83 aa).

The next 2 helical transmembrane spans lie at 8-28 and 58-78; these read IASI…PALG and LAMI…LLFA.

This sequence belongs to the ATPase C chain family. In terms of assembly, F-type ATPases have 2 components, F(1) - the catalytic core - and F(0) - the membrane proton channel. F(1) has five subunits: alpha(3), beta(3), gamma(1), delta(1), epsilon(1). F(0) has four main subunits: a(1), b(1), b'(1) and c(10-14). The alpha and beta chains form an alternating ring which encloses part of the gamma chain. F(1) is attached to F(0) by a central stalk formed by the gamma and epsilon chains, while a peripheral stalk is formed by the delta, b and b' chains.

It localises to the cell inner membrane. F(1)F(0) ATP synthase produces ATP from ADP in the presence of a proton or sodium gradient. F-type ATPases consist of two structural domains, F(1) containing the extramembraneous catalytic core and F(0) containing the membrane proton channel, linked together by a central stalk and a peripheral stalk. During catalysis, ATP synthesis in the catalytic domain of F(1) is coupled via a rotary mechanism of the central stalk subunits to proton translocation. Functionally, key component of the F(0) channel; it plays a direct role in translocation across the membrane. A homomeric c-ring of between 10-14 subunits forms the central stalk rotor element with the F(1) delta and epsilon subunits. In Cereibacter sphaeroides (strain ATCC 17029 / ATH 2.4.9) (Rhodobacter sphaeroides), this protein is ATP synthase subunit c 2.